The sequence spans 265 residues: S-acyl fatty acid synthase thioesterase, medium chain (265 aa).

Met1 is subject to N-acetylmethionine. Catalysis depends on residues Ser101 and His237.

The protein belongs to the thioesterase family. Interacts (via C-terminus) with FASN. As to expression, detected both in lactating and non-lactating breast epithelium (at protein level). Isoform 2 is up-regulated in bone marrow-derived mononuclear cells of rheumatoid arthritis patients.

The protein localises to the cytoplasm. It is found in the cytosol. It catalyses the reaction (9Z)-octadecenoyl-[ACP] + H2O = (9Z)-octadecenoate + holo-[ACP] + H(+). The catalysed reaction is decanoyl-CoA + H2O = decanoate + CoA + H(+). It carries out the reaction dodecanoyl-CoA + H2O = dodecanoate + CoA + H(+). The enzyme catalyses tetradecanoyl-CoA + H2O = tetradecanoate + CoA + H(+). It catalyses the reaction hexadecanoyl-CoA + H2O = hexadecanoate + CoA + H(+). Contributes to the release of free fatty acids from fatty acid synthase (FASN). Has broad substrate specificity, giving rise to a range of free fatty acids with chain lengths between 10 and 16 carbon atoms (C10 - C16). This chain is S-acyl fatty acid synthase thioesterase, medium chain, found in Homo sapiens (Human).